The primary structure comprises 201 residues: Phospholipase A2 inhibitor PIP (201 aa).

An N-terminal signal peptide occupies residues 1–19 (MKSLQTICLLFIFIARGTS). 8 cysteine pairs are disulfide-bonded: Cys22-Cys46, Cys25-Cys32, Cys39-Cys67, Cys73-Cys94, Cys95-Cys100, Cys118-Cys143, Cys136-Cys165, and Cys169-Cys191. N-linked (GlcNAc...) asparagine glycosylation occurs at Asn157.

Homohexamer. In terms of processing, glycosylated. In terms of tissue distribution, expressed by the liver.

The protein localises to the secreted. Its function is as follows. Inhibits the enzymatic activity of phospholipase A2 (PA2). Binds to the major PLA2 toxin of D.russelli siamensis (Daboiatoxin, AC Q7T2R1, and AC Q7T3T5) at 1-2-fold molar excess of inhibitor to toxin. It exhibits broad spectra in neutralizing the toxicity of various snake venoms and toxins and inhibits the formation of edema in mice. May bind to PLA2 through its proline-rich hydrophobic core region. This Malayopython reticulatus (Reticulate python) protein is Phospholipase A2 inhibitor PIP.